The sequence spans 107 residues: Ferredoxin (107 aa).

4Fe-4S ferredoxin-type domains are found at residues 8–37 (ERVV…LDEN) and 38–67 (GKSR…KASE). The [4Fe-4S] cluster site is built by cysteine 17, cysteine 20, and cysteine 23. 3 residues coordinate [3Fe-4S] cluster: cysteine 27, cysteine 47, and cysteine 53. Cysteine 57 contributes to the [4Fe-4S] cluster binding site.

Monomer. [4Fe-4S] cluster is required as a cofactor. It depends on [3Fe-4S] cluster as a cofactor. The N-terminus is blocked.

Its function is as follows. Ferredoxins are iron-sulfur proteins that transfer electrons in a wide variety of metabolic reactions. The protein is Ferredoxin of Pyrobaculum islandicum (strain DSM 4184 / JCM 9189 / GEO3).